Consider the following 250-residue polypeptide: 2-C-methyl-D-erythritol 4-phosphate cytidylyltransferase (250 aa).

This sequence belongs to the IspD/TarI cytidylyltransferase family. IspD subfamily.

It carries out the reaction 2-C-methyl-D-erythritol 4-phosphate + CTP + H(+) = 4-CDP-2-C-methyl-D-erythritol + diphosphate. It functions in the pathway isoprenoid biosynthesis; isopentenyl diphosphate biosynthesis via DXP pathway; isopentenyl diphosphate from 1-deoxy-D-xylulose 5-phosphate: step 2/6. Its function is as follows. Catalyzes the formation of 4-diphosphocytidyl-2-C-methyl-D-erythritol from CTP and 2-C-methyl-D-erythritol 4-phosphate (MEP). The sequence is that of 2-C-methyl-D-erythritol 4-phosphate cytidylyltransferase from Streptomyces avermitilis (strain ATCC 31267 / DSM 46492 / JCM 5070 / NBRC 14893 / NCIMB 12804 / NRRL 8165 / MA-4680).